The following is a 616-amino-acid chain: D-glutamate cyclase, mitochondrial (616 aa).

A mitochondrion-targeting transit peptide spans 1–28 (MPFTLHLRSRLPSAIRSLILQKKPNIRN).

The protein belongs to the D-glutamate cyclase family.

The protein localises to the mitochondrion matrix. It carries out the reaction D-glutamate = 5-oxo-D-proline + H2O. In terms of biological role, D-glutamate cyclase that converts D-glutamate to 5-oxo-D-proline. This is D-glutamate cyclase, mitochondrial from Homo sapiens (Human).